A 668-amino-acid chain; its full sequence is DNA ligase (668 aa).

NAD(+) is bound by residues 34 to 38, 83 to 84, and Glu-117; these read DAEYD and SL. Lys-119 (N6-AMP-lysine intermediate) is an active-site residue. NAD(+) contacts are provided by Arg-140, Glu-177, Lys-293, and Lys-317. Positions 411, 414, 429, and 434 each coordinate Zn(2+). Positions 591-668 constitute a BRCT domain; that stretch reads RVGGRFTGKT…SEDDFLELMQ (78 aa).

Belongs to the NAD-dependent DNA ligase family. LigA subfamily. It depends on Mg(2+) as a cofactor. Mn(2+) is required as a cofactor.

The enzyme catalyses NAD(+) + (deoxyribonucleotide)n-3'-hydroxyl + 5'-phospho-(deoxyribonucleotide)m = (deoxyribonucleotide)n+m + AMP + beta-nicotinamide D-nucleotide.. DNA ligase that catalyzes the formation of phosphodiester linkages between 5'-phosphoryl and 3'-hydroxyl groups in double-stranded DNA using NAD as a coenzyme and as the energy source for the reaction. It is essential for DNA replication and repair of damaged DNA. The chain is DNA ligase from Citrifermentans bemidjiense (strain ATCC BAA-1014 / DSM 16622 / JCM 12645 / Bem) (Geobacter bemidjiensis).